Consider the following 347-residue polypeptide: Fructose-1,6-bisphosphatase class 1 2 (347 aa).

Glutamate 92, aspartate 111, leucine 113, and aspartate 114 together coordinate Mg(2+). Substrate contacts are provided by residues 114-117 (DGSS) and asparagine 202. Glutamate 274 is a Mg(2+) binding site.

Belongs to the FBPase class 1 family. In terms of assembly, homotetramer. Mg(2+) serves as cofactor.

It localises to the cytoplasm. The enzyme catalyses beta-D-fructose 1,6-bisphosphate + H2O = beta-D-fructose 6-phosphate + phosphate. It functions in the pathway carbohydrate biosynthesis; Calvin cycle. The chain is Fructose-1,6-bisphosphatase class 1 2 from Bradyrhizobium sp. (strain BTAi1 / ATCC BAA-1182).